An 860-amino-acid chain; its full sequence is DDB1- and CUL4-associated factor 6 (860 aa).

WD repeat units lie at residues 49–88 (VHDGCVNTICWNDTGEYILSGSDDTKLVISNPYSRKVLTT), 92–133 (GHRA…ETNR), 139–179 (CHYG…SCTK), 189–229 (NCRR…TRAT), and 251–290 (NKSCRVTSLCYSEDGQEILVSYSSDYIYLFDPKDDTAREL). Composition is skewed to basic and acidic residues over residues 288–303 (RELKTPSAEERREELR) and 312–334 (LRGDWSDTGPRARPESERERDGE). Disordered stretches follow at residues 288 to 340 (RELK…PNVS), 355 to 392 (EASEVAQSNRGRGRSRPRGGTSQSDISTLPTVPSSPDL), 407 to 490 (QFLQ…TTST), and 502 to 675 (IASS…GPGD). S336 carries the post-translational modification Phosphoserine. Composition is skewed to polar residues over residues 379-388 (DISTLPTVPS) and 409-421 (LQPSTSSTMSAQA). A compositionally biased stretch (low complexity) spans 422 to 441 (HSTSSPTESPHSTPLLSSPD). The segment covering 457-467 (HQSDNNNEKLS) has biased composition (basic and acidic residues). Polar residues predominate over residues 480–490 (HYSTEGTTTST). A compositionally biased stretch (low complexity) spans 502 to 511 (IASSSRGIGS). Residues 535-549 (SETKAPEESSEDVTK) are compositionally biased toward basic and acidic residues. Residues 614–626 (TSTESATNENNTN) show a composition bias toward low complexity. Over residues 627–636 (PEPQFQTEAT) the composition is skewed to polar residues. S649 bears the Phosphoserine mark. T654 carries the post-translational modification Phosphothreonine. S657 carries the post-translational modification Phosphoserine. One can recognise an IQ domain in the interval 676 to 705 (RRSAVARIQEFFRRRKERKEMEELDTLNIR). WD repeat units lie at residues 718 to 756 (NSRTMIKEANFWGANFVMSGSDCGHIFIWDRHTAEHLML) and 759 to 798 (ADNHVVNCLQPHPFDPILASSGIDYDIKIWSPLEESRIFN). 2 positions are modified to phosphoserine: S847 and S850.

As to quaternary structure, interacts with the nuclear receptors NR3C1 and AR in the presence of ligand. Interacts with DDB1, CUL4A and CUL4B. In terms of tissue distribution, highly expressed in skeletal muscle and testis. Expressed to a lesser degree in heart, prostate, and adrenal gland.

The protein localises to the nucleus. The protein operates within protein modification; protein ubiquitination. Functionally, ligand-dependent coactivator of nuclear receptors. Enhance transcriptional activity of the nuclear receptors NR3C1 and AR. May function as a substrate receptor for CUL4-DDB1 E3 ubiquitin-protein ligase complex. The chain is DDB1- and CUL4-associated factor 6 (DCAF6) from Homo sapiens (Human).